The primary structure comprises 328 residues: C-type lectin domain family 4 member K (328 aa).

The Cytoplasmic portion of the chain corresponds to 1–43; it reads MTVEKEAPDAHFTVDKQNISLWPREPPPKSGPSLVPGKTPTVR. A helical; Signal-anchor for type II membrane protein transmembrane segment spans residues 44–64; it reads AALICLTLVLVASVLLQAVLY. Residues 65-328 are Extracellular-facing; the sequence is PRFMGTISDV…CKRPYVPSEP (264 aa). Residues N87, N113, and N180 are each glycosylated (N-linked (GlcNAc...) asparagine). Positions 145 to 190 form a coiled coil; it reads EEVSTLNAQIPELKSDLEKASALNTKIRALQGSLENMSKLLKRQND. The 119-residue stretch at 202-320 folds into the C-type lectin domain; the sequence is FKGNFYYFSL…CDKTFLFICK (119 aa). 2 disulfide bridges follow: C223–C319 and C295–C311.

As to quaternary structure, homotrimer. Exclusively expressed by Langerhans cells. Expressed in astrocytoma and malignant ependymoma, but not in normal brain tissues.

The protein localises to the membrane. Functionally, calcium-dependent lectin displaying mannose-binding specificity. Induces the formation of Birbeck granules (BGs); is a potent regulator of membrane superimposition and zippering. Binds to sulfated as well as mannosylated glycans, keratan sulfate (KS) and beta-glucans. Facilitates uptake of antigens and is involved in the routing and/or processing of antigen for presentation to T cells. Major receptor on primary Langerhans cells for Candida species, Saccharomyces species, and Malassezia furfur. Protects against human immunodeficiency virus-1 (HIV-1) infection. Binds to high-mannose structures present on the envelope glycoprotein which is followed by subsequent targeting of the virus to the Birbeck granules leading to its rapid degradation. In Homo sapiens (Human), this protein is C-type lectin domain family 4 member K (CD207).